The chain runs to 327 residues: Malate dehydrogenase (327 aa).

12-18 contacts NAD(+); it reads GAAGQIC. Substrate contacts are provided by arginine 92 and arginine 98. NAD(+)-binding positions include asparagine 105, glutamine 112, and 129–131; that span reads TGN. Asparagine 131 and arginine 162 together coordinate substrate. Catalysis depends on histidine 187, which acts as the Proton acceptor.

The protein belongs to the LDH/MDH superfamily. MDH type 2 family.

The catalysed reaction is (S)-malate + NAD(+) = oxaloacetate + NADH + H(+). Functionally, catalyzes the reversible oxidation of malate to oxaloacetate. This is Malate dehydrogenase from Cutibacterium acnes (strain DSM 16379 / KPA171202) (Propionibacterium acnes).